The chain runs to 476 residues: Proline--tRNA ligase 2 (476 aa).

Belongs to the class-II aminoacyl-tRNA synthetase family. ProS type 3 subfamily. Homodimer.

It is found in the cytoplasm. The catalysed reaction is tRNA(Pro) + L-proline + ATP = L-prolyl-tRNA(Pro) + AMP + diphosphate. Functionally, catalyzes the attachment of proline to tRNA(Pro) in a two-step reaction: proline is first activated by ATP to form Pro-AMP and then transferred to the acceptor end of tRNA(Pro). This chain is Proline--tRNA ligase 2, found in Bacillus thuringiensis subsp. konkukian (strain 97-27).